Consider the following 118-residue polypeptide: MSAPAQPPAEGTEGTAPGGGPPGPPPNMTSNRRLQQTQAQVEEVVDIIRVNVDKVLERDQKLSELDDRADALQAGASQFESSAAKLKRKYWWKNCKMMIMLGAICAIIVVVIVIYFFT.

The tract at residues 1–36 (MSAPAQPPAEGTEGTAPGGGPPGPPPNMTSNRRLQQ) is disordered. Residues 1–96 (MSAPAQPPAE…KRKYWWKNCK (96 aa)) are Cytoplasmic-facing. The v-SNARE coiled-coil homology domain occupies 33 to 93 (RLQQTQAQVE…AKLKRKYWWK (61 aa)). Ser-63 carries the phosphoserine modification. A helical; Anchor for type IV membrane protein transmembrane segment spans residues 97–116 (MMIMLGAICAIIVVVIVIYF). At 117–118 (FT) the chain is on the vesicular side.

Belongs to the synaptobrevin family. In terms of assembly, interacts with VAPA and VAPB. Post-translationally, (Microbial infection) Targeted and hydrolyzed by C.botulinum neurotoxin type B (BoNT/B, botB) which probably hydrolyzes the 78-Gln-|-Phe-79 bond and inhibits neurotransmitter release. (Microbial infection) Targeted and hydrolyzed by C.botulinum neurotoxin type D (BoNT/D, botD) which probably hydrolyzes the 61-Arg-|-Leu-62 bond and inhibits neurotransmitter release. BoNT/D has low catalytic activity on this protein due to its sequence. Note that humans are not known to be infected by C.botulinum type D. In terms of processing, (Microbial infection) Targeted and hydrolyzed by C.botulinum neurotoxin type F (BoNT/F, botF) which probably hydrolyzes the 60-Gln-|-Lys-61 bond and inhibits neurotransmitter release. Post-translationally, (Microbial infection) Targeted and hydrolyzed by C.botulinum neurotoxin type X (BoNT/X) which probably hydrolyzes the 68-Arg-|-Ala-69 bond and inhibits neurotransmitter release. It remains unknown whether BoNT/X is ever produced, or what organisms it targets. Nervous system, skeletal muscle and adipose tissue.

The protein resides in the cytoplasmic vesicle. It is found in the secretory vesicle. It localises to the synaptic vesicle membrane. Its subcellular location is the synapse. The protein localises to the synaptosome. The protein resides in the cytoplasmic vesicle membrane. It is found in the mitochondrion outer membrane. Involved in the targeting and/or fusion of transport vesicles to their target membrane. This is Vesicle-associated membrane protein 1 (VAMP1) from Homo sapiens (Human).